The following is a 397-amino-acid chain: MNYAYPDEKGHYGIYGGRYVPETLMQSVLELEEAYKEAMEDEAFQKELNHYLKTYVGRETPLYFAENMTEYCGGAKIYLKREDLNHTGAHKINNTIGQALLAVRMGKKKVVAETGAGQHGVATATVCALLGLECVIFMGEEDVRRQKLNVFRMELLGAKVESVAAGSGTLKDAVNEALRYWVSHVHDTHYIMGSVLGPHPFPQIVRDFQSVIGKETKKQYEALEGKLPEAVVACIGGGSNAMGMFYPFVHDEEVALYGVEAAGKGVHTEKHAATLTKGSVGVLHGSMMYLLQNEEGQIQEAHSISAGLDYPGVGPEHSLLKDIGRVSYHSITDDEALEAFQLLTKKEGIIPALESSHAVAYALKLAPKMKEDEGLVICLSGRGDKDVESIKRYMEEV.

N6-(pyridoxal phosphate)lysine is present on Lys-91.

It belongs to the TrpB family. As to quaternary structure, tetramer of two alpha and two beta chains. The cofactor is pyridoxal 5'-phosphate.

The enzyme catalyses (1S,2R)-1-C-(indol-3-yl)glycerol 3-phosphate + L-serine = D-glyceraldehyde 3-phosphate + L-tryptophan + H2O. It participates in amino-acid biosynthesis; L-tryptophan biosynthesis; L-tryptophan from chorismate: step 5/5. Functionally, the beta subunit is responsible for the synthesis of L-tryptophan from indole and L-serine. The sequence is that of Tryptophan synthase beta chain from Bacillus cereus (strain ZK / E33L).